Consider the following 366-residue polypeptide: 3-isopropylmalate dehydrogenase (366 aa).

Residue G78–E91 participates in NAD(+) binding. Residues R99, R109, R138, and D227 each coordinate substrate. Mg(2+) contacts are provided by D227, D251, and D255. G285–N297 is an NAD(+) binding site.

Belongs to the isocitrate and isopropylmalate dehydrogenases family. LeuB type 1 subfamily. Homodimer. It depends on Mg(2+) as a cofactor. Mn(2+) serves as cofactor.

Its subcellular location is the cytoplasm. The catalysed reaction is (2R,3S)-3-isopropylmalate + NAD(+) = 4-methyl-2-oxopentanoate + CO2 + NADH. It participates in amino-acid biosynthesis; L-leucine biosynthesis; L-leucine from 3-methyl-2-oxobutanoate: step 3/4. Catalyzes the oxidation of 3-carboxy-2-hydroxy-4-methylpentanoate (3-isopropylmalate) to 3-carboxy-4-methyl-2-oxopentanoate. The product decarboxylates to 4-methyl-2 oxopentanoate. This chain is 3-isopropylmalate dehydrogenase, found in Buchnera aphidicola subsp. Baizongia pistaciae (strain Bp).